The chain runs to 88 residues: Exodeoxyribonuclease 7 small subunit (88 aa).

The protein belongs to the XseB family. Heterooligomer composed of large and small subunits.

Its subcellular location is the cytoplasm. The catalysed reaction is Exonucleolytic cleavage in either 5'- to 3'- or 3'- to 5'-direction to yield nucleoside 5'-phosphates.. Its function is as follows. Bidirectionally degrades single-stranded DNA into large acid-insoluble oligonucleotides, which are then degraded further into small acid-soluble oligonucleotides. The protein is Exodeoxyribonuclease 7 small subunit of Bordetella petrii (strain ATCC BAA-461 / DSM 12804 / CCUG 43448).